The sequence spans 381 residues: Metallophosphoesterase 1 (381 aa).

Residues 15 to 35 (LIFAFVSVFVFCEYVIYYLVI) form a helical membrane-spanning segment. A divalent metal cation-binding residues include D59, D101, N139, H234, H288, and H290. A helical transmembrane segment spans residues 341 to 361 (TVLVVYCSSCLIIALITLIHL). The Di-lysine motif signature appears at 377 to 381 (KHKTL).

It belongs to the metallophosphoesterase superfamily. MPPE1 family. The cofactor is Mn(2+).

It is found in the endoplasmic reticulum-Golgi intermediate compartment membrane. Metallophosphoesterase that catalyzes the removal of a side-chain ethanolamine-phosphate (EtNP) from the second mannose of the GPI-anchor protein intermediate. Participates in the glycan remodeling steps of GPI-anchor maturation to allow an efficient transport of GPI-anchor proteins from the endoplasmic reticulum to the Golgi. The chain is Metallophosphoesterase 1 from Danio rerio (Zebrafish).